The chain runs to 396 residues: L-lactate dehydrogenase (396 aa).

One can recognise an FMN hydroxy acid dehydrogenase domain in the interval 1–380 (MIISAASDYR…SGDSLVQELG (380 aa)). Residue Tyr-24 coordinates substrate. FMN contacts are provided by Ser-106 and Gln-127. Tyr-129 is a binding site for substrate. An FMN-binding site is contributed by Thr-155. Position 164 (Arg-164) interacts with substrate. FMN is bound at residue Lys-251. Residue His-275 is the Proton acceptor of the active site. Substrate is bound at residue Arg-278. 306–330 (DSGIRNGLDVVRMIALGADTVLLGR) contacts FMN.

Belongs to the FMN-dependent alpha-hydroxy acid dehydrogenase family. FMN serves as cofactor.

The protein resides in the cell inner membrane. It carries out the reaction (S)-lactate + A = pyruvate + AH2. Catalyzes the conversion of L-lactate to pyruvate. Is coupled to the respiratory chain. This Salmonella heidelberg (strain SL476) protein is L-lactate dehydrogenase.